A 225-amino-acid polypeptide reads, in one-letter code: UPF0758 protein Sputw3181_0338 (225 aa).

Residues 102–224 (VLTNPDLTRD…IVSFAERGWI (123 aa)) form the MPN domain. Residues H173, H175, and D186 each coordinate Zn(2+). A JAMM motif motif is present at residues 173–186 (HNHPSGIAEPSQAD).

The protein belongs to the UPF0758 family.

The polypeptide is UPF0758 protein Sputw3181_0338 (Shewanella sp. (strain W3-18-1)).